A 1028-amino-acid chain; its full sequence is Multidrug resistance protein MdtC (1028 aa).

The next 12 helical transmembrane spans lie at 3-23 (FFAL…AITL), 333-353 (EVEQ…FLFL), 360-380 (LIPA…MYLC), 387-407 (LSLM…IVVL), 431-451 (VGFT…PLLL), 463-483 (FAVT…TLTP), 528-548 (LVGV…ISIP), 853-873 (VILI…LYES), 875-895 (VHPL…LLAL), 897-917 (LFNA…IGIV), 953-973 (PIMM…ISGG), and 984-1004 (ITIV…TPVV).

This sequence belongs to the resistance-nodulation-cell division (RND) (TC 2.A.6) family. MdtC subfamily. Part of a tripartite efflux system composed of MdtA, MdtB and MdtC. MdtC forms a heteromultimer with MdtB.

The protein localises to the cell inner membrane. This is Multidrug resistance protein MdtC from Citrobacter koseri (strain ATCC BAA-895 / CDC 4225-83 / SGSC4696).